We begin with the raw amino-acid sequence, 420 residues long: UDP-N-acetylglucosamine 1-carboxyvinyltransferase (420 aa).

Residue 22 to 23 (KN) coordinates phosphoenolpyruvate. R95 is a binding site for UDP-N-acetyl-alpha-D-glucosamine. Residue C119 is the Proton donor of the active site. 2-(S-cysteinyl)pyruvic acid O-phosphothioketal is present on C119. Residues 124–128 (RPIDQ), D307, and I329 each bind UDP-N-acetyl-alpha-D-glucosamine.

The protein belongs to the EPSP synthase family. MurA subfamily.

The protein localises to the cytoplasm. The enzyme catalyses phosphoenolpyruvate + UDP-N-acetyl-alpha-D-glucosamine = UDP-N-acetyl-3-O-(1-carboxyvinyl)-alpha-D-glucosamine + phosphate. It participates in cell wall biogenesis; peptidoglycan biosynthesis. Its function is as follows. Cell wall formation. Adds enolpyruvyl to UDP-N-acetylglucosamine. The sequence is that of UDP-N-acetylglucosamine 1-carboxyvinyltransferase from Myxococcus xanthus (strain DK1622).